The primary structure comprises 425 residues: Synaptotagmin-4 (425 aa).

The Vesicular portion of the chain corresponds to 1–16 (MAPITTSREEFDEIPT). A helical transmembrane segment spans residues 17 to 37 (VVGIFSAFGLVFTVSLFAWIC). The Cytoplasmic segment spans residues 38-425 (CQRKSSKSNK…IAKWHVLCDG (388 aa)). The span at 73–83 (FGADDKNEVKN) shows a compositional bias: basic and acidic residues. Disordered stretches follow at residues 73 to 93 (FGAD…NSLH) and 127 to 147 (LEGE…SLTS). Phosphoserine; by MAPK8 is present on Ser-135. Low complexity predominate over residues 135-146 (SPESLKSSTSLT). C2 domains follow at residues 153–274 (KLGT…MLMN) and 287–420 (GRGE…AKWH). Residues Asp-246, Ser-249, and Asp-252 each contribute to the Ca(2+) site.

The protein belongs to the synaptotagmin family. Interacts with KIF1A; the interaction increases in presence of calcium and decreases when SYT4 is phosphorylated at Ser-135. Ca(2+) serves as cofactor. Phosphorylation at Ser-135 by MAPK8/JNK1 reduces interaction with KIF1A and neuronal dense core vesicles mobility. In terms of tissue distribution, expressed in melanocytes. Expressed in brain. Within brain, expression is highest in hippocampus, with substantial levels also detected in amygdala and thalamus.

The protein resides in the cytoplasmic vesicle. It is found in the secretory vesicle. It localises to the neuronal dense core vesicle membrane. Synaptotagmin family member which does not bind Ca(2+). Involved in neuronal dense core vesicles (DCVs) mobility through its interaction with KIF1A. Upon increased neuronal activity, phosphorylation by MAPK8/JNK1 destabilizes the interaction with KIF1A and captures DCVs to synapses. Plays a role in dendrite formation by melanocytes. The protein is Synaptotagmin-4 (SYT4) of Homo sapiens (Human).